The primary structure comprises 339 residues: tRNA pseudouridine synthase D (339 aa).

Asp-80 serves as the catalytic Nucleophile. Residues 155-311 enclose the TRUD domain; sequence GFPNYFTEQR…AKGFSWAFEL (157 aa).

It belongs to the pseudouridine synthase TruD family.

It catalyses the reaction uridine(13) in tRNA = pseudouridine(13) in tRNA. In terms of biological role, responsible for synthesis of pseudouridine from uracil-13 in transfer RNAs. The protein is tRNA pseudouridine synthase D of Haemophilus influenzae (strain PittEE).